We begin with the raw amino-acid sequence, 60 residues long: MANQTVKVTQVKSSIGRLPKHKATLRGLGLRRINHTVELEDTACVRGMINQVSYMVKVEG.

The protein belongs to the universal ribosomal protein uL30 family. Part of the 50S ribosomal subunit.

This is Large ribosomal subunit protein uL30 from Pseudoalteromonas translucida (strain TAC 125).